We begin with the raw amino-acid sequence, 397 residues long: Nickel-cobalt-cadmium resistance protein NccB (397 aa).

The helical transmembrane segment at 10-30 threads the bilayer; sequence PSWPMIAGVAAAAALVGFGAA. Positions 137–195 form a coiled coil; it reads EAAAMAAERKVAQARADLARKTYERESSLFQQGVTPRQEMESARIALDVAQAEVQRAAT.

Belongs to the membrane fusion protein (MFP) (TC 8.A.1) family.

It localises to the cell inner membrane. In terms of biological role, component of the NCC cation efflux system that confers resistance to nickel, cobalt and cadmium. The chain is Nickel-cobalt-cadmium resistance protein NccB (nccB) from Alcaligenes xylosoxydans xylosoxydans (Achromobacter xylosoxidans).